An 84-amino-acid polypeptide reads, in one-letter code: Neurotoxin BM10-1-like (84 aa).

The signal sequence occupies residues 1-21 (MKTLLLTLVVVTIVCLDLGYT). Cystine bridges form between C24–C47, C27–C32, C40–C64, C68–C76, and C77–C82.

Belongs to the three-finger toxin family. Ancestral subfamily. Orphan group IV sub-subfamily. As to expression, expressed by the venom gland.

The protein resides in the secreted. Its function is as follows. Binds and inhibits muscular and neuronal nicotinic acetylcholine receptors (nAChR). This Bungarus multicinctus (Many-banded krait) protein is Neurotoxin BM10-1-like.